Reading from the N-terminus, the 501-residue chain is ATP synthase subunit alpha (501 aa).

169–176 serves as a coordination point for ATP; the sequence is GDRQTGKT.

The protein belongs to the ATPase alpha/beta chains family. F-type ATPases have 2 components, CF(1) - the catalytic core - and CF(0) - the membrane proton channel. CF(1) has five subunits: alpha(3), beta(3), gamma(1), delta(1), epsilon(1). CF(0) has three main subunits: a(1), b(2) and c(9-12). The alpha and beta chains form an alternating ring which encloses part of the gamma chain. CF(1) is attached to CF(0) by a central stalk formed by the gamma and epsilon chains, while a peripheral stalk is formed by the delta and b chains.

Its subcellular location is the cell membrane. It catalyses the reaction ATP + H2O + 4 H(+)(in) = ADP + phosphate + 5 H(+)(out). Produces ATP from ADP in the presence of a proton gradient across the membrane. The alpha chain is a regulatory subunit. The polypeptide is ATP synthase subunit alpha (Streptococcus agalactiae serotype III (strain NEM316)).